The primary structure comprises 246 residues: Pyrroloquinoline-quinone synthase (246 aa).

It belongs to the PqqC family.

The catalysed reaction is 6-(2-amino-2-carboxyethyl)-7,8-dioxo-1,2,3,4,7,8-hexahydroquinoline-2,4-dicarboxylate + 3 O2 = pyrroloquinoline quinone + 2 H2O2 + 2 H2O + H(+). Its pathway is cofactor biosynthesis; pyrroloquinoline quinone biosynthesis. Functionally, ring cyclization and eight-electron oxidation of 3a-(2-amino-2-carboxyethyl)-4,5-dioxo-4,5,6,7,8,9-hexahydroquinoline-7,9-dicarboxylic-acid to PQQ. This is Pyrroloquinoline-quinone synthase from Acidiphilium cryptum (strain JF-5).